The sequence spans 360 residues: tRNA-specific 2-thiouridylase MnmA (360 aa).

ATP is bound by residues 8–15 (GMSGGVDS) and Met-34. The tract at residues 94 to 96 (NPD) is interaction with target base in tRNA. Catalysis depends on Cys-99, which acts as the Nucleophile. Cys-99 and Cys-195 are oxidised to a cystine. Gly-123 serves as a coordination point for ATP. The interval 145–147 (KDQ) is interaction with tRNA. Cys-195 (cysteine persulfide intermediate) is an active-site residue. The tract at residues 307–308 (RY) is interaction with tRNA.

This sequence belongs to the MnmA/TRMU family.

It is found in the cytoplasm. The catalysed reaction is S-sulfanyl-L-cysteinyl-[protein] + uridine(34) in tRNA + AH2 + ATP = 2-thiouridine(34) in tRNA + L-cysteinyl-[protein] + A + AMP + diphosphate + H(+). In terms of biological role, catalyzes the 2-thiolation of uridine at the wobble position (U34) of tRNA, leading to the formation of s(2)U34. This Methylobacillus flagellatus (strain ATCC 51484 / DSM 6875 / VKM B-1610 / KT) protein is tRNA-specific 2-thiouridylase MnmA.